Consider the following 284-residue polypeptide: Protein phosphatase 1 regulatory subunit 3B (284 aa).

Positions 61–64 (RVSF) match the PP1-binding motif motif. Residues 124-232 (RNRLQTDHVC…SNKGKNYRII (109 aa)) enclose the CBM21 domain. Residue S260 is modified to Phosphoserine.

Interacts with glycogen, PPP1CC catalytic subunit of PP1 and PYGL. Associates with glycogen particles. Forms complexes with debranching enzyme, glycogen phosphorylase, glycogen synthase and phosphorylase kinase which is necessary for its regulation of PP1 activity.

In terms of biological role, acts as a glycogen-targeting subunit for phosphatase PP1. Facilitates interaction of the PP1 with enzymes of the glycogen metabolism and regulates its activity. Suppresses the rate at which PP1 dephosphorylates (inactivates) glycogen phosphorylase and enhances the rate at which it activates glycogen synthase and therefore limits glycogen breakdown. Its activity is inhibited by PYGL, resulting in inhibition of the glycogen synthase and glycogen phosphorylase phosphatase activities of PP1. Dramatically increases basal and insulin-stimulated glycogen synthesis upon overexpression in hepatocytes. This chain is Protein phosphatase 1 regulatory subunit 3B (PPP1R3B), found in Bos taurus (Bovine).